We begin with the raw amino-acid sequence, 273 residues long: Nicotinamide N-methyltransferase (273 aa).

S-adenosyl-L-methionine contacts are provided by residues Tyr-35, Tyr-40, 74–75, Tyr-80, Asp-96, Asn-101, and 152–153; these read GA and NV.

It belongs to the class I-like SAM-binding methyltransferase superfamily. NNMT/PNMT/TEMT family.

The enzyme catalyses nicotinamide + S-adenosyl-L-methionine = 1-methylnicotinamide + S-adenosyl-L-homocysteine. Functionally, catalyzes the N-methylation of nicotinamide and other pyridines to form pyridinium ions. Involved in regulation of lifespan extension downstream of the sirtuin sir-2.1, probably through its role in nicotinic acid metabolism. The chain is Nicotinamide N-methyltransferase from Caenorhabditis elegans.